Here is a 359-residue protein sequence, read N- to C-terminus: Type-1 angiotensin II receptor (359 aa).

Residues 1-25 lie on the Extracellular side of the membrane; it reads MALNSSADDGIKRIQDDCPKAGRHS. Residue asparagine 4 is glycosylated (N-linked (GlcNAc...) asparagine). Angiotensin II-binding residues include glutamine 15 and aspartate 17. Cystine bridges form between cysteine 18–cysteine 274 and cysteine 101–cysteine 180. A helical transmembrane segment spans residues 26–55; the sequence is YIFVMIPTLYSIIFVVGIFGNSLVVIVIYF. The Cytoplasmic segment spans residues 56–61; the sequence is YMKLKT. The helical transmembrane segment at 62 to 89 threads the bilayer; sequence VASVFLLNLALADLCFLLTLPVWAVYTA. Over 90-98 the chain is Extracellular; the sequence is MEYRWPFGN. A helical membrane pass occupies residues 99–125; it reads HLCKIASAGISFNLYASVFLLTCLSID. Residues 126 to 141 lie on the Cytoplasmic side of the membrane; the sequence is RYLAIVHPMKSRLRRT. Residues 142 to 165 traverse the membrane as a helical segment; that stretch reads MLVAKVTCVVIWLLAGLASLPAVI. The Extracellular segment spans residues 166–190; it reads HRNVYFIENTNSTVCAFHYESQNST. Arginine 167 serves as a coordination point for angiotensin II. The N-linked (GlcNAc...) asparagine glycan is linked to asparagine 176. 3 residues coordinate angiotensin II: phenylalanine 182, histidine 183, and tyrosine 184. Asparagine 188 is a glycosylation site (N-linked (GlcNAc...) asparagine). A helical transmembrane segment spans residues 191–216; it reads LPVGLGLTKNILGFMFPFLIILTSYT. Angiotensin II is bound at residue lysine 199. Residues 217 to 239 are Cytoplasmic-facing; the sequence is LIWKALKKAYEIQKNKPRNDDIF. The helical transmembrane segment at 240–268 threads the bilayer; that stretch reads RIIMAIVLFFFFSWIPHQIFTFLDVLIQL. Over 269–278 the chain is Extracellular; sequence GVIRDCKIAD. Residues 279–304 traverse the membrane as a helical segment; the sequence is VVDTAMPITICIAYFNNCLNPLFYGF. Over 305–359 the chain is Cytoplasmic; the sequence is LGKKFKKYFLQLLKYIPPKAKSHSSLSTKMSTLSYRPSDNMNSSAKKPASCFEVE. Cysteine 355 carries S-palmitoyl cysteine lipidation.

The protein belongs to the G-protein coupled receptor 1 family. Interacts with MAS1. Interacts with ARRB1. Interacts with FLNA (via filamin repeat 21); increases PKA-mediated phosphorylation of FLNA. In terms of processing, C-terminal Ser or Thr residues may be phosphorylated.

Its subcellular location is the cell membrane. Functionally, receptor for angiotensin II, a vasoconstricting peptide, which acts as a key regulator of blood pressure and sodium retention by the kidney. The activated receptor in turn couples to G-alpha proteins G(q) (GNAQ, GNA11, GNA14 or GNA15) and thus activates phospholipase C and increases the cytosolic Ca(2+) concentrations, which in turn triggers cellular responses such as stimulation of protein kinase C. This Meriones unguiculatus (Mongolian jird) protein is Type-1 angiotensin II receptor (AGTR1).